A 366-amino-acid polypeptide reads, in one-letter code: GDSL esterase/lipase LTL1 (366 aa).

The signal sequence occupies residues 1–27 (MNINCSPLGFLISLFFIVTFLAPQVKS). The active-site Nucleophile is the S36. N-linked (GlcNAc...) asparagine glycosylation occurs at N117. Active-site residues include D326 and H329. An N-linked (GlcNAc...) asparagine glycan is attached at N354.

The protein belongs to the 'GDSL' lipolytic enzyme family. As to quaternary structure, binds to VLG at the endomembrane system. As to expression, mostly expressed in flowers, reproductive stems and rosette leaves, and, to a lower extent, in roots.

The protein resides in the secreted. Its function is as follows. Involved in the mechanisms of salt tolerance. Mediates resistance to LiCl and NaCl. The chain is GDSL esterase/lipase LTL1 from Arabidopsis thaliana (Mouse-ear cress).